The chain runs to 166 residues: UPF0304 protein VC_1871 (166 aa).

The protein belongs to the UPF0304 family.

In Vibrio cholerae serotype O1 (strain ATCC 39315 / El Tor Inaba N16961), this protein is UPF0304 protein VC_1871.